We begin with the raw amino-acid sequence, 261 residues long: MNSFQALILGLVQGLTEYLPVSSSGHLVLLQKIFGLKENVLLFDILVHLGTLVPLLIIFRDEILAIIKKPWGRLPLLIIAGTVPTALIGLGFKDFFERLFVSGSTLGIEFIITGLILWLAERQKSGRKNLEKTTFLDAIFVGVAQGLAILPAISRSGLTISGALIRGLNREWAAKFSFLLSIPAILGAAVLDLKSFVEQNANLAGIDLMPFIVGFFAAMLSGYFAVKFMLEILRKGKLTWFSYYVWILGVTILVLQAAGKF.

The next 6 helical transmembrane spans lie at 39–59 (NVLLFDILVHLGTLVPLLIIF), 76–96 (LLIIAGTVPTALIGLGFKDFF), 99–119 (LFVSGSTLGIEFIITGLILWL), 173–193 (AAKFSFLLSIPAILGAAVLDL), 206–226 (IDLMPFIVGFFAAMLSGYFAV), and 238–258 (LTWFSYYVWILGVTILVLQAA).

It belongs to the UppP family.

It localises to the cell membrane. The catalysed reaction is di-trans,octa-cis-undecaprenyl diphosphate + H2O = di-trans,octa-cis-undecaprenyl phosphate + phosphate + H(+). In terms of biological role, catalyzes the dephosphorylation of undecaprenyl diphosphate (UPP). Confers resistance to bacitracin. This chain is Undecaprenyl-diphosphatase, found in Carboxydothermus hydrogenoformans (strain ATCC BAA-161 / DSM 6008 / Z-2901).